A 753-amino-acid chain; its full sequence is MSKNSEFINLSFLLDHEKEMILGVLKRDEYLKKVEDKRIRKLKNELLEAKRRSGKTHQEASRVCVHCHKTLGLIFDRGDPCQACSLRVCSECRVTGLDGSWKCTVCAKVAQLRIISGEWFLEEKAKRFKQVNVLGTDVVRQSILRRSPGSEETQNQEQAQQCVDKSDTLSSVRQKTTHDGPKKKGFLLSKFRSATRGEIRTPKPESGRSYSLDLDSQNLQSFKSASGSDRGSTTSSDLIDQEAGRRTSKSSYSNGGIPVTQRSPVPSAHSVTSINSREHGFENSMALATIENTCEELTKSHRRNTSGTPSIAVSGTSLSSERSRSEVDLSESFAEDLEDTSSIRSRSVPGALDKDLNSLEDTEDGVDLVSSRFSANTHSLASGLSTNSQAGSDRKRSYLNVPDADSDTTSLNSMMSVYSETGDYGNVKVTGEILLHISYCYKTGGLYIFVKSCRNLATGDEKKQRTDAYVKSYLLPDKSRNNKRKTKIRTGTNPEFNETLKYTISHTQLETRTLQLSVWHYDRFGRNSFLGEVEIAFDSWNFENPCDEWFVLQPKVELAPDISLQYKGELTIVLRYIPPEENLIFPAGQRQEKKIFKRGKKKESSSISGGILEVFIKKAKNLTAVKSGGTSDSFVKGYLLPDDNKATKHKTAVVKKSVNPEWNHTFIFSGLYPQDIKNACLELTIWDKEAFSSNVFLGGVRLNSGSGMSYGKTVDWMDSHGEEQRLWQKMADNPGTSVEGVLMLRSSMAKCRL.

Residues 7–123 enclose the RabBD domain; sequence FINLSFLLDH…IISGEWFLEE (117 aa). Residues 64 to 106 form an FYVE-type zinc finger; that stretch reads CVHCHKTLGLIFDRGDPCQACSLRVCSECRVTGLDGSWKCTVC. Disordered regions lie at residues 145–279, 297–359, and 380–404; these read RRSP…SREH, LTKS…LNSL, and LASG…VPDA. A Phosphoserine modification is found at Ser147. The segment covering 150–174 has biased composition (polar residues); sequence SEETQNQEQAQQCVDKSDTLSSVRQ. Residues 195-206 are compositionally biased toward basic and acidic residues; that stretch reads TRGEIRTPKPES. A compositionally biased stretch (polar residues) spans 214–223; sequence LDSQNLQSFK. A compositionally biased stretch (low complexity) spans 224–237; sequence SASGSDRGSTTSSD. The span at 249 to 275 shows a compositional bias: polar residues; sequence KSSYSNGGIPVTQRSPVPSAHSVTSIN. A compositionally biased stretch (polar residues) spans 380-391; that stretch reads LASGLSTNSQAG. C2 domains follow at residues 429–550 and 597–717; these read VTGE…DEWF and KRGK…VDWM.

As to quaternary structure, binds RAB27A that has been activated by GTP-binding.

Its subcellular location is the membrane. Functionally, may act as Rab effector protein and play a role in vesicle trafficking. Binds phospholipids. This Mus musculus (Mouse) protein is Synaptotagmin-like protein 5 (Sytl5).